A 348-amino-acid polypeptide reads, in one-letter code: 3-isopropylmalate dehydrogenase (348 aa).

76–87 (GPKWTDPNNRPE) serves as a coordination point for NAD(+). Positions 94, 104, 132, and 217 each coordinate substrate. Residues aspartate 217, aspartate 241, and aspartate 245 each coordinate Mg(2+). Position 275 to 287 (275 to 287 (GSAPDIAGKNVAN)) interacts with NAD(+).

Belongs to the isocitrate and isopropylmalate dehydrogenases family. LeuB type 1 subfamily. Homodimer. Mg(2+) is required as a cofactor. The cofactor is Mn(2+).

The protein localises to the cytoplasm. It catalyses the reaction (2R,3S)-3-isopropylmalate + NAD(+) = 4-methyl-2-oxopentanoate + CO2 + NADH. It participates in amino-acid biosynthesis; L-leucine biosynthesis; L-leucine from 3-methyl-2-oxobutanoate: step 3/4. Functionally, catalyzes the oxidation of 3-carboxy-2-hydroxy-4-methylpentanoate (3-isopropylmalate) to 3-carboxy-4-methyl-2-oxopentanoate. The product decarboxylates to 4-methyl-2 oxopentanoate. In Staphylococcus aureus (strain bovine RF122 / ET3-1), this protein is 3-isopropylmalate dehydrogenase.